The sequence spans 107 residues: DNA polymerase delta subunit 4 (107 aa).

The PCNA-interaction protein motif (PIP box) motif lies at 1–16 (MGRKRLITDSYPVVKR). The tract at residues 1 to 44 (MGRKRLITDSYPVVKRREGPAGHSKGELAPELGEEPQPRDEEEA) is disordered. Residues 15-28 (KRREGPAGHSKGEL) show a composition bias toward basic and acidic residues.

Belongs to the DNA polymerase delta subunit 4 family. Component of the tetrameric DNA polymerase delta complex (Pol-delta4), which consists of POLD1/p125, POLD2/p50, POLD3/p66/p68 and POLD4/p12, with POLD1 bearing DNA polymerase and 3' to 5' proofreading exonuclease activities. Within this complex, directly interacts with POLD1 and POLD2. Directly interacts with PCNA, as do POLD1 and POLD3; this interaction stimulates Pol-delta4 polymerase activity. As POLD1 and POLD2, directly interacts with WRNIP1; this interaction stimulates DNA polymerase delta-mediated DNA synthesis, independently of the presence of PCNA. This stimulation may be due predominantly to an increase of initiation frequency and also to increased processivity. Upon genotoxic stress induced by DNA damaging agents or by replication stress, POLD4 is proteolytically degraded and Pol-delta4 is converted into a trimeric form of the complex (Pol-delta3) which has an increased proofreading activity. The DNA polymerase delta complex interacts with POLDIP2; this interaction is probably mediated through direct binding to POLD2. Post-translationally, ubiquitinated; undergoes 'Lys-48'-linked ubiquitination in response to UV irradiation, leading to proteasomal degradation. This modification is partly mediated by RNF8 and by the DCX(DTL) E3 ubiquitin ligase complex (also called CRL4(CDT2)). Efficient degradation requires the presence of PCNA and is required for the inhibition of fork progression after DNA damage.

It is found in the nucleus. In terms of biological role, as a component of the tetrameric DNA polymerase delta complex (Pol-delta4), plays a role in high fidelity genome replication and repair. Within this complex, increases the rate of DNA synthesis and decreases fidelity by regulating POLD1 polymerase and proofreading 3' to 5' exonuclease activity. Pol-delta4 participates in Okazaki fragment processing, through both the short flap pathway, as well as a nick translation system. Under conditions of DNA replication stress, required for the repair of broken replication forks through break-induced replication (BIR), a mechanism that may induce segmental genomic duplications of up to 200 kb. Involved in Pol-delta4 translesion synthesis (TLS) of templates carrying O6-methylguanine or abasic sites. Its degradation in response to DNA damage is required for the inhibition of fork progression and cell survival. This Homo sapiens (Human) protein is DNA polymerase delta subunit 4 (POLD4).